A 337-amino-acid polypeptide reads, in one-letter code: 2-oxoglutarate-dependent dioxygenase frbA (337 aa).

Positions 175 to 290 (CSAELRLNHY…RHSLAYFGKP (116 aa)) constitute a Fe2OG dioxygenase domain. 3 residues coordinate Fe cation: histidine 202, aspartate 204, and histidine 262. Arginine 281 is a 2-oxoglutarate binding site.

This sequence belongs to the iron/ascorbate-dependent oxidoreductase family. Requires Fe(2+) as cofactor.

It functions in the pathway antifungal biosynthesis. Functionally, 2-oxoglutarate-dependent dioxygenase; part of the gene cluster that mediates the biosynthesis of the antifungal antibiotic FR901469, an inhibitor of beta-1,3-glucansynthase, exerting antifungal activity against the pathogenes Candida albicans and Aspergillus fumigatus. FR901469 is a cyclic depsipeptide containing 12 amino acid residues and a fatty acid chain. The NRPS frbI contains 12 modules responsible for the formation of the depsipeptide backbone which is denoted as Acyl-Thr-Ala-Tyr-Val-4OHPro-Thr-Thr-3OHPro-threo3OHGln-Gly-Thr-Orn-OH (C71H116N14O23). The PKS frbB is probably involved in the production of the hydrocarbon chain, and the acyl-CoA ligase frbC might be involved in the transport of the chain to the peptide ptoduct of frbI. Because FR901469 contains 3 hydroxylated amino acid residues, the 3 oxygenases frbA, frbH, and frbJ might be participating in amino acid hydroxylation. As no thioesterase domains were detected in frbI or frbB, the thioesterases frbD and frbE may instead release and cyclize the products of the NRPS and PKS, respectively. This Dothideomycetidae sp. (strain 11243) (Fungal sp. (strain No.11243)) protein is 2-oxoglutarate-dependent dioxygenase frbA.